The sequence spans 92 residues: YcgL domain-containing protein PBPRA1080 (92 aa).

Residues 1–84 (MLCSIYKSSK…PVTNLLHQYK (84 aa)) form the YcgL domain.

This Photobacterium profundum (strain SS9) protein is YcgL domain-containing protein PBPRA1080.